The sequence spans 229 residues: Zinc finger matrin-type protein 4 (229 aa).

4 Matrin-type zinc fingers span residues Ser-14–Leu-44, Asp-72–Leu-106, Arg-145–Arg-175, and Tyr-198–Asn-228.

Its subcellular location is the nucleus. This Mus musculus (Mouse) protein is Zinc finger matrin-type protein 4 (Zmat4).